The chain runs to 81 residues: MMPSSSFQQTPKPVDLDDPRFEQYDCLPCRLVGAGAFTGLGIYAYSQSRIPLNTPNYKLKRFGILGMAYGFILTGVYRLFQ.

To yeast YDL157C.

The protein resides in the mitochondrion. This is an uncharacterized protein from Schizosaccharomyces pombe (strain 972 / ATCC 24843) (Fission yeast).